The sequence spans 629 residues: Serine/threonine-protein kinase ICK (629 aa).

Positions 4 to 284 constitute a Protein kinase domain; it reads YTTIKQLGDG…ASQALRYPYF (281 aa). ATP contacts are provided by residues 10–18 and Lys33; that span reads LGDGTYGSV. Asp125 serves as the catalytic Proton acceptor. The residue at position 157 (Thr157) is a Phosphothreonine; by CDK7. Tyr159 carries the post-translational modification Phosphotyrosine. Phosphoserine is present on Ser161. 3 disordered regions span residues 292-376, 455-483, and 581-629; these read IISK…SLHN, SESVGTGTTVSTQASSQRRDTPTLQSSAK, and SSLK…PSRR. Residues 296–306 show a composition bias toward basic and acidic residues; sequence DSGKPQREVQD. A compositionally biased stretch (pro residues) spans 309 to 321; that stretch reads GPPPYIKPAPPAQ. 2 stretches are compositionally biased toward low complexity: residues 322–344 and 457–470; these read APAKAYTLISSRPSQASQPPQHS and SVGTGTTVSTQASS.

It belongs to the protein kinase superfamily. CMGC Ser/Thr protein kinase family. CDC2/CDKX subfamily. Mg(2+) serves as cofactor. Autophosphorylated on serine and threonine residues. Phosphorylation at Thr-157 by CDK7/Cak1p increases kinase activity. Highly expressed in colon and lung, lower levels present in heart, esophagus, stomach, small intestine and ovary. Localizes to the crypt region of large and small intestine.

Its subcellular location is the cytoplasm. The protein localises to the cytosol. It is found in the cell projection. The protein resides in the cilium. It localises to the nucleus. Its subcellular location is the cytoskeleton. The protein localises to the cilium basal body. The enzyme catalyses L-seryl-[protein] + ATP = O-phospho-L-seryl-[protein] + ADP + H(+). It catalyses the reaction L-threonyl-[protein] + ATP = O-phospho-L-threonyl-[protein] + ADP + H(+). Its function is as follows. Has an essential role in ciliogenesis, particularly in neuronal and retinal progenitor cells. Phosphorylates KIF3A. Involved in the control of ciliary length. Regulates the ciliary localization of SHH pathway components as well as the localization of IFT components at ciliary tips. May play a role in cardiac development. Regulates intraflagellar transport (IFT) speed and negatively regulates cilium length in a cAMP and mTORC1 signaling -dependent manner and this regulation requires its kinase activity. The sequence is that of Serine/threonine-protein kinase ICK (Cilk1) from Mus musculus (Mouse).